Reading from the N-terminus, the 320-residue chain is Atrochrysone carboxyl ACP thioesterase (320 aa).

Positions 103, 105, 107, and 108 each coordinate Zn(2+). D107 serves as the catalytic Proton donor/acceptor.

The protein belongs to the metallo-beta-lactamase superfamily. Zn(2+) is required as a cofactor.

The catalysed reaction is atrochrysone carboxyl-[ACP] + H2O = atrochrysone carboxylate + holo-[ACP] + H(+). It participates in secondary metabolite biosynthesis. Atrochrysone carboxyl ACP thioesterase; part of the gene cluster that mediates the biosynthesis of geodin, an intermediate in the biosynthesis of other natural products. The pathway begins with the synthesis of atrochrysone thioester by the polyketide synthase (PKS) gedC. The atrochrysone carboxyl ACP thioesterase gedB then breaks the thioester bond and releases the atrochrysone carboxylic acid from gedC. The atrochrysone carboxylic acid is then converted to atrochrysone which is further transformed into emodinanthrone. The next step is performed by the emodinanthrone oxygenase gedH that catalyzes the oxidation of emodinanthrone to emodin. Emodin O-methyltransferase encoded probably by gedA then catalyzes methylation of the 8-hydroxy group of emodin to form questin. Ring cleavage of questin by questin oxidase gedK leads to desmethylsulochrin via several intermediates including questin epoxide. Another methylation step probably catalyzed by methyltransferase gedG leads to the formation of sulochrin which is further converted to dihydrogeodin by the sulochrin halogenase gedL. Finally, the dihydrogeodin oxidase gedJ catalyzes the stereospecific phenol oxidative coupling reaction converting dihydrogeodin to geodin. This Aspergillus terreus (strain NIH 2624 / FGSC A1156) protein is Atrochrysone carboxyl ACP thioesterase.